A 273-amino-acid chain; its full sequence is HMP-PP phosphatase (273 aa).

The active-site Nucleophile is the Asp-8. Mg(2+) contacts are provided by Asp-8, Asp-10, and Asp-212.

This sequence belongs to the HAD-like hydrolase superfamily. Cof family. Requires Mg(2+) as cofactor.

The enzyme catalyses 4-amino-2-methyl-5-(diphosphooxymethyl)pyrimidine + H2O = 4-amino-2-methyl-5-(phosphooxymethyl)pyrimidine + phosphate + H(+). Catalyzes the hydrolysis of 4-amino-2-methyl-5-hydroxymethylpyrimidine pyrophosphate (HMP-PP) to 4-amino-2-methyl-5-hydroxymethylpyrimidine phosphate (HMP-P). This chain is HMP-PP phosphatase, found in Yersinia pseudotuberculosis serotype IB (strain PB1/+).